Consider the following 465-residue polypeptide: Methionine aminopeptidase 2-1 (465 aa).

The tract at residues 1–100 (MGSKTAENES…QSSPPRIPLA (100 aa)) is disordered. Residues 31 to 40 (RGAHWSRDGD) are compositionally biased toward basic and acidic residues. A compositionally biased stretch (basic residues) spans 75–87 (SKKRKKRPKKKTS). His-216 provides a ligand contact to substrate. Asp-237, Asp-248, and His-317 together coordinate a divalent metal cation. His-325 is a substrate binding site. Residues Glu-350 and Glu-446 each contribute to the a divalent metal cation site.

Belongs to the peptidase M24A family. Methionine aminopeptidase eukaryotic type 2 subfamily. Requires Co(2+) as cofactor. It depends on Zn(2+) as a cofactor. The cofactor is Mn(2+). Fe(2+) serves as cofactor.

It localises to the cytoplasm. The enzyme catalyses Release of N-terminal amino acids, preferentially methionine, from peptides and arylamides.. Its function is as follows. Cotranslationally removes the N-terminal methionine from nascent proteins. The N-terminal methionine is often cleaved when the second residue in the primary sequence is small and uncharged (Met-Ala-, Cys, Gly, Pro, Ser, Thr, or Val). This is Methionine aminopeptidase 2-1 from Penicillium rubens (strain ATCC 28089 / DSM 1075 / NRRL 1951 / Wisconsin 54-1255) (Penicillium chrysogenum).